A 253-amino-acid polypeptide reads, in one-letter code: Ubiquinone/menaquinone biosynthesis C-methyltransferase UbiE (253 aa).

S-adenosyl-L-methionine contacts are provided by residues Thr76, Asp97, and Asn125–Ala126.

The protein belongs to the class I-like SAM-binding methyltransferase superfamily. MenG/UbiE family.

It catalyses the reaction a 2-demethylmenaquinol + S-adenosyl-L-methionine = a menaquinol + S-adenosyl-L-homocysteine + H(+). The enzyme catalyses a 2-methoxy-6-(all-trans-polyprenyl)benzene-1,4-diol + S-adenosyl-L-methionine = a 5-methoxy-2-methyl-3-(all-trans-polyprenyl)benzene-1,4-diol + S-adenosyl-L-homocysteine + H(+). It functions in the pathway quinol/quinone metabolism; menaquinone biosynthesis; menaquinol from 1,4-dihydroxy-2-naphthoate: step 2/2. Its pathway is cofactor biosynthesis; ubiquinone biosynthesis. Methyltransferase required for the conversion of demethylmenaquinol (DMKH2) to menaquinol (MKH2) and the conversion of 2-polyprenyl-6-methoxy-1,4-benzoquinol (DDMQH2) to 2-polyprenyl-3-methyl-6-methoxy-1,4-benzoquinol (DMQH2). This chain is Ubiquinone/menaquinone biosynthesis C-methyltransferase UbiE, found in Stenotrophomonas maltophilia (strain K279a).